The following is a 304-amino-acid chain: MNLILEFLLLVGVIIYSYLESLVKFFIPRRRKSVTGQTVLITGAGHGIGRLTAYEFAKQKSRLVLWDINKRGVEETADKCRKLGAVVHVFVVDCSNRAEIYNSVDQVKREVGDVEIVVNNAGAIYPADLLSAKDEEITKTFEVNILGHFWIIKALLPSMLRRNSGHIVTVASVCGHGVIPYLIPYCSSKFAAVGFHRALTAELDTLGKTGIQTSCLCPVFVNTGFTKNPSTRLWPVLEPEEVARSLINGILTNKKMIFVPSYINISLILEKGPGFSSKHPHGGSQQPVTPIPGDLTPSSDFLKH.

The signal sequence occupies residues 1–19; that stretch reads MNLILEFLLLVGVIIYSYL. S33 is modified (phosphoserine). Residue 40-67 participates in NAD(+) binding; the sequence is LITGAGHGIGRLTAYEFAKQKSRLVLWD. K79 carries the N6-acetyllysine modification. S172 is a substrate binding site. Residue Y185 is the Proton acceptor of the active site. K189 serves as a coordination point for NAD(+). Residues 276–304 are disordered; sequence SSKHPHGGSQQPVTPIPGDLTPSSDFLKH.

It belongs to the short-chain dehydrogenases/reductases (SDR) family. As to expression, expressed predominantly in the liver (at protein level).

Its subcellular location is the lipid droplet. It is found in the endoplasmic reticulum. The catalysed reaction is 17beta-estradiol + NAD(+) = estrone + NADH + H(+). The enzyme catalyses all-trans-retinol + NAD(+) = all-trans-retinal + NADH + H(+). It catalyses the reaction all-trans-retinal + NAD(+) + H2O = all-trans-retinoate + NADH + 2 H(+). In terms of biological role, plays a pivotal role in hepatic lipid metabolism. In vitro, it catalyzes the oxidation of a variety of lipid substrates, including 17beta-estradiol, retinol, retinal, and leukotriene B4. The sequence is that of 17-beta-hydroxysteroid dehydrogenase 13 (Hsd17b13) from Mus musculus (Mouse).